A 316-amino-acid chain; its full sequence is Mitochondrial distribution and morphology protein 12 (316 aa).

Residues 1–312 (MSIDLEWNGL…FPNFHTLVLG (312 aa)) form the SMP-LTD domain.

Belongs to the MDM12 family. As to quaternary structure, component of the ER-mitochondria encounter structure (ERMES) or MDM complex, composed of MMM1, MDM10, MDM12 and MDM34. An MMM1 homodimer associates with one molecule of MDM12 on each side in a pairwise head-to-tail manner, and the SMP-LTD domains of MMM1 and MDM12 generate a continuous hydrophobic tunnel for phospholipid trafficking.

The protein resides in the mitochondrion outer membrane. Its subcellular location is the endoplasmic reticulum membrane. Functionally, component of the ERMES/MDM complex, which serves as a molecular tether to connect the endoplasmic reticulum (ER) and mitochondria. Components of this complex are involved in the control of mitochondrial shape and protein biogenesis, and function in nonvesicular lipid trafficking between the ER and mitochondria. MDM12 is required for the interaction of the ER-resident membrane protein MMM1 and the outer mitochondrial membrane-resident beta-barrel protein MDM10. The MDM12-MMM1 subcomplex functions in the major beta-barrel assembly pathway that is responsible for biogenesis of all mitochondrial outer membrane beta-barrel proteins, and acts in a late step after the SAM complex. The MDM10-MDM12-MMM1 subcomplex further acts in the TOM40-specific pathway after the action of the MDM12-MMM1 complex. Essential for establishing and maintaining the structure of mitochondria and maintenance of mtDNA nucleoids. The polypeptide is Mitochondrial distribution and morphology protein 12 (Postia placenta (strain ATCC 44394 / Madison 698-R) (Brown rot fungus)).